The following is a 374-amino-acid chain: Alginate lyase (374 aa).

Positions 1 to 26 are cleaved as a signal peptide; the sequence is MRNPKLKNLLAPTLLSLAMFAGATQA. Substrate-binding positions include 67–68, 140–141, and tyrosine 258; these read SK and HT.

The protein belongs to the polysaccharide lyase 5 family.

It localises to the periplasm. It catalyses the reaction Eliminative cleavage of alginate to give oligosaccharides with 4-deoxy-alpha-L-erythro-hex-4-enuronosyl groups at their non-reducing ends and beta-D-mannuronate at their reducing end.. Its function is as follows. Catalyzes the depolymerization of alginate by cleaving the beta-1,4 glycosidic bond between two adjacent sugar residues via a beta-elimination mechanism. May serve to degrade mislocalized alginate that is trapped in the periplasmic space. The chain is Alginate lyase from Cobetia marina (Deleya marina).